A 136-amino-acid chain; its full sequence is uncharacterized protein (136 aa).

The interval Met-1–Arg-51 is disordered. Basic and acidic residues predominate over residues Gln-37 to Ser-46.

This is an uncharacterized protein from Homo sapiens (Human).